A 189-amino-acid polypeptide reads, in one-letter code: MKKTLMAVGLAAVMSIPFAANAADYVIDTKGAHASINFKVNHLGYSYIKGRFNKFDGEFSYDPANIAASSVVVNVDTRSLDSNHAERDKHIRSADFIDASKYSTATFKSTEVVDKGNGQLEVKGDLTLHGQTKPIVINAEFIGAGQDPWGGQRSGFAGTTRLELKDFGIQVMGASSYVDMELHVEGVQK.

A signal peptide spans 1–22 (MKKTLMAVGLAAVMSIPFAANA).

It belongs to the UPF0312 family. Type 1 subfamily.

Its subcellular location is the periplasm. This is UPF0312 protein VC_A0539 from Vibrio cholerae serotype O1 (strain ATCC 39315 / El Tor Inaba N16961).